Here is a 337-residue protein sequence, read N- to C-terminus: Vacuolar protein sorting-associated protein 26B-A (337 aa).

The disordered stretch occupies residues 313–337 (RFEGTSHPETRPQHSGAAAVEQEHE).

It belongs to the VPS26 family. In terms of assembly, component of the heterotrimeric retromer cargo-selective complex (CSC) which is believed to associate with variable sorting nexins to form functionally distinct retromer complex variants.

The protein resides in the cytoplasm. The protein localises to the endosome membrane. Its subcellular location is the early endosome. Acts as a component of the retromer cargo-selective complex (CSC). The CSC is believed to be the core functional component of retromer or respective retromer complex variants acting to prevent missorting of selected transmembrane cargo proteins into the lysosomal degradation pathway. Retromer mediates retrograde transport of cargo proteins from endosomes to the trans-Golgi network (TGN). The polypeptide is Vacuolar protein sorting-associated protein 26B-A (vps26b-a) (Xenopus laevis (African clawed frog)).